The following is a 414-amino-acid chain: Probable cell wall biosynthesis protein LcpB (414 aa).

A disordered region spans residues 1-108; it reads MDSPGQGEIA…PPVIAGDGGR (108 aa). The Cytoplasmic segment spans residues 1 to 120; that stretch reads MDSPGQGEIA…KAISFKPRGC (120 aa). Positions 9 to 23 are enriched in basic and acidic residues; that stretch reads IARDSQGRPILDRYG. Pro residues predominate over residues 33-42; sequence RQTPPTPRTP. The span at 43-53 shows a compositional bias: low complexity; sequence PVNETRVYQPR. Residues 54–80 are compositionally biased toward pro residues; sequence QTPPRQTPPRQTPPRQMPPRQTPPRQV. A helical membrane pass occupies residues 121 to 141; the sequence is LGTIAGVLAVGLVLVFVVTLW. Residues 142 to 414 are Periplasmic-facing; the sequence is ADSKLNRVDA…GAEALFSSMR (273 aa).

This sequence belongs to the LytR/CpsA/Psr (LCP) family.

The protein resides in the cell inner membrane. The sequence is that of Probable cell wall biosynthesis protein LcpB from Corynebacterium glutamicum (strain ATCC 13032 / DSM 20300 / JCM 1318 / BCRC 11384 / CCUG 27702 / LMG 3730 / NBRC 12168 / NCIMB 10025 / NRRL B-2784 / 534).